A 189-amino-acid chain; its full sequence is Putative manganese efflux pump MntP (189 aa).

6 helical membrane passes run 2–22 (SLTELILLAIGLSMDASAVSI), 36–56 (ILQMAVMFAVFQGIMPLIGYY), 71–91 (WIAFILLVIIGGKMIHESITA), 106–126 (LLLVQAVATSIDALAVGVSLS), 132–152 (ILYSITIIGIVTFICCTAAIL), and 167–187 (IVGGLILVGIGVKIFVQHMFF).

Belongs to the MntP (TC 9.B.29) family.

Its subcellular location is the cell membrane. Probably functions as a manganese efflux pump. This chain is Putative manganese efflux pump MntP, found in Ruminiclostridium cellulolyticum (strain ATCC 35319 / DSM 5812 / JCM 6584 / H10) (Clostridium cellulolyticum).